Consider the following 590-residue polypeptide: NADH-ubiquinone oxidoreductase chain 5 (590 aa).

Transmembrane regions (helical) follow at residues 1–21 (MNLI…MSIM), 31–51 (LMVL…NNEL), 77–97 (LLFT…SLWY), 104–124 (INKF…IITA), 130–150 (LFIG…WWHG), 167–187 (IGDI…SINM), 190–210 (LMIQ…AAAT), 230–250 (TPVS…FLLI), 261–281 (IMLT…AAAA), 314–336 (AFLH…GSYI), 355–375 (LPMT…MPFL), 398–418 (IMIT…IMLF), 439–461 (HPLA…STLQ), 466–486 (VTMP…GVLL), and 568–588 (MIKN…LFIM).

Belongs to the complex I subunit 5 family.

It is found in the mitochondrion inner membrane. It carries out the reaction a ubiquinone + NADH + 5 H(+)(in) = a ubiquinol + NAD(+) + 4 H(+)(out). Core subunit of the mitochondrial membrane respiratory chain NADH dehydrogenase (Complex I) that is believed to belong to the minimal assembly required for catalysis. Complex I functions in the transfer of electrons from NADH to the respiratory chain. The immediate electron acceptor for the enzyme is believed to be ubiquinone. The sequence is that of NADH-ubiquinone oxidoreductase chain 5 (MT-ND5) from Lycodon semicarinatus (Ryukyu odd-tooth snake).